The primary structure comprises 78 residues: Acyl carrier protein (78 aa).

The Carrier domain maps to 2-77; sequence SDIAERVKKI…DAIKFLEKNA (76 aa). O-(pantetheine 4'-phosphoryl)serine is present on S37.

It belongs to the acyl carrier protein (ACP) family. In terms of processing, 4'-phosphopantetheine is transferred from CoA to a specific serine of apo-ACP by AcpS. This modification is essential for activity because fatty acids are bound in thioester linkage to the sulfhydryl of the prosthetic group.

The protein resides in the cytoplasm. It functions in the pathway lipid metabolism; fatty acid biosynthesis. In terms of biological role, carrier of the growing fatty acid chain in fatty acid biosynthesis. The sequence is that of Acyl carrier protein from Xanthobacter autotrophicus (strain ATCC BAA-1158 / Py2).